A 253-amino-acid chain; its full sequence is Ubiquinone/menaquinone biosynthesis C-methyltransferase UbiE (253 aa).

S-adenosyl-L-methionine is bound by residues T76, D97, 125–126 (NA), and S142.

This sequence belongs to the class I-like SAM-binding methyltransferase superfamily. MenG/UbiE family.

The enzyme catalyses a 2-demethylmenaquinol + S-adenosyl-L-methionine = a menaquinol + S-adenosyl-L-homocysteine + H(+). It catalyses the reaction a 2-methoxy-6-(all-trans-polyprenyl)benzene-1,4-diol + S-adenosyl-L-methionine = a 5-methoxy-2-methyl-3-(all-trans-polyprenyl)benzene-1,4-diol + S-adenosyl-L-homocysteine + H(+). The protein operates within quinol/quinone metabolism; menaquinone biosynthesis; menaquinol from 1,4-dihydroxy-2-naphthoate: step 2/2. Its pathway is cofactor biosynthesis; ubiquinone biosynthesis. Functionally, methyltransferase required for the conversion of demethylmenaquinol (DMKH2) to menaquinol (MKH2) and the conversion of 2-polyprenyl-6-methoxy-1,4-benzoquinol (DDMQH2) to 2-polyprenyl-3-methyl-6-methoxy-1,4-benzoquinol (DMQH2). The polypeptide is Ubiquinone/menaquinone biosynthesis C-methyltransferase UbiE (Xanthomonas oryzae pv. oryzae (strain MAFF 311018)).